Here is a 123-residue protein sequence, read N- to C-terminus: Small ribosomal subunit protein uS13 (123 aa).

A disordered region spans residues 95-123 (GLPVRGQRTKTNARTRKGPIKTVGAKRKK).

The protein belongs to the universal ribosomal protein uS13 family. As to quaternary structure, part of the 30S ribosomal subunit. Forms a loose heterodimer with protein S19. Forms two bridges to the 50S subunit in the 70S ribosome.

Functionally, located at the top of the head of the 30S subunit, it contacts several helices of the 16S rRNA. In the 70S ribosome it contacts the 23S rRNA (bridge B1a) and protein L5 of the 50S subunit (bridge B1b), connecting the 2 subunits; these bridges are implicated in subunit movement. Contacts the tRNAs in the A and P-sites. This is Small ribosomal subunit protein uS13 from Desulfitobacterium hafniense (strain DSM 10664 / DCB-2).